Here is a 429-residue protein sequence, read N- to C-terminus: uncharacterized protein (429 aa).

Catalysis depends on charge relay system residues Ser116, Asp179, and His206.

The protein belongs to the AB hydrolase 3 family.

It localises to the cytoplasm. The protein resides in the nucleus. This is an uncharacterized protein from Schizosaccharomyces pombe (strain 972 / ATCC 24843) (Fission yeast).